The chain runs to 639 residues: MNLEKLSKPELLTLFSILEGELEARDLVIEALKAQHRDTFIEERYGKYNISDPLMALQRDFETLKEKNDGEKQPVCTNPLSILKVVMKQCKNMQERMLSQLAAAESRHRKVILDLEEERQRHAQDTAEGDDVTYMLEKERERLTQQLEFEKSQVKKFEKEQKKLSSQLEEERSRHKQLSSMLVLECKKATNKAAEEGQKAGELSLKLEKEKSRVSKLEEELAAERKRGLQTEAQVEKQLSEFDIEREQLRAKLNREENRTKTLKEEMESLKKIVKDLEASHQHSSPNEQLKKPVTVSKGTATEPLMLMSVFCQTESFPAERTHGSNIAKMTNTGLPGPATPAYSYAKTNGHCDPEIQTTRELTAGNNVENQVPPREKSVALAQEKPVENGGCPVGIETPVPMPSPLPSSGSSLSPSSTASSSLTSSPCSSPVLTKRLLGSSASSPGYQSSYQVGINQRFHAARHKFQSQADQDQQASGLQSPPSRDLSPTLIDNSAAKQLARNTVTQVLSRFTSQQGPIKPVSPNSSPFGTDYRNLANTANPRGDTSHSPTPGKVSSPLSPLSPGIKSPTIPRAERGNPPPIPPKKPGLTPSPSATTPLTKTHSQAASLTTAEDLASSCSSNTVVANGKDVELLLPTSS.

A coiled-coil region spans residues 87-285 (MKQCKNMQER…DLEASHQHSS (199 aa)). Phosphoserine is present on residues S284 and S285. Disordered regions lie at residues 387–430 (VENG…PCSS), 463–490 (RHKF…LSPT), and 511–609 (RFTS…AASL). Composition is skewed to low complexity over residues 407-430 (PSSG…PCSS) and 467-477 (QSQADQDQQAS). Residues S481, S488, S523, S527, S560, S563, and S568 each carry the phosphoserine modification. A compositionally biased stretch (polar residues) spans 511–529 (RFTSQQGPIKPVSPNSSPF). Phosphothreonine is present on residues T570 and T590. The span at 587–600 (PGLTPSPSATTPLT) shows a compositional bias: low complexity. S592 carries the post-translational modification Phosphoserine.

Interacts with CTTN/cortactin; this interaction may redistribute CTTN to stress fibers. May form homomers. Associates with the core of STRIPAK complexes composed of PP2A catalytic and scaffolding subunits, the striatins (PP2A regulatory subunits), the striatin-associated proteins MOB4, STRIP1 and STRIP2, PDCD10 and members of the STE20 kinases, such as STK24 and STK26.

It localises to the cell projection. It is found in the lamellipodium. The protein localises to the cytoplasm. The protein resides in the cytoskeleton. Its subcellular location is the stress fiber. Regulates lamellipodial actin dynamics in a CTTN-dependent manner. Associates with core striatin-interacting phosphatase and kinase (STRIPAK) complex to form CTTNBP2NL-STRIPAK complexes. STRIPAK complexes have critical roles in protein (de)phosphorylation and are regulators of multiple signaling pathways including Hippo, MAPK, nuclear receptor and cytoskeleton remodeling. Different types of STRIPAK complexes are involved in a variety of biological processes such as cell growth, differentiation, apoptosis, metabolism and immune regulation. The protein is CTTNBP2 N-terminal-like protein (CTTNBP2NL) of Pongo abelii (Sumatran orangutan).